The following is a 329-amino-acid chain: tRNA uridine(34) hydroxylase (329 aa).

A Rhodanese domain is found at Ser123–Ser217. The Cysteine persulfide intermediate role is filled by Cys177. Residues Arg285 to Lys329 form a disordered region. Basic and acidic residues predominate over residues Gly296–Arg323.

This sequence belongs to the TrhO family.

The enzyme catalyses uridine(34) in tRNA + AH2 + O2 = 5-hydroxyuridine(34) in tRNA + A + H2O. In terms of biological role, catalyzes oxygen-dependent 5-hydroxyuridine (ho5U) modification at position 34 in tRNAs. The polypeptide is tRNA uridine(34) hydroxylase (Vibrio atlanticus (strain LGP32) (Vibrio splendidus (strain Mel32))).